A 276-amino-acid chain; its full sequence is 1-(5-phosphoribosyl)-5-[(5-phosphoribosylamino)methylideneamino] imidazole-4-carboxamide isomerase (276 aa).

The protein belongs to the HisA/HisF family.

The protein resides in the cytoplasm. The enzyme catalyses 1-(5-phospho-beta-D-ribosyl)-5-[(5-phospho-beta-D-ribosylamino)methylideneamino]imidazole-4-carboxamide = 5-[(5-phospho-1-deoxy-D-ribulos-1-ylimino)methylamino]-1-(5-phospho-beta-D-ribosyl)imidazole-4-carboxamide. The protein operates within amino-acid biosynthesis; L-histidine biosynthesis; L-histidine from 5-phospho-alpha-D-ribose 1-diphosphate: step 4/9. The chain is 1-(5-phosphoribosyl)-5-[(5-phosphoribosylamino)methylideneamino] imidazole-4-carboxamide isomerase (HIS6) from Debaryomyces hansenii (strain ATCC 36239 / CBS 767 / BCRC 21394 / JCM 1990 / NBRC 0083 / IGC 2968) (Yeast).